The chain runs to 415 residues: Serine hydroxymethyltransferase (415 aa).

(6S)-5,6,7,8-tetrahydrofolate-binding positions include Leu120 and 124–126; that span reads GHL. Position 229 is an N6-(pyridoxal phosphate)lysine (Lys229).

The protein belongs to the SHMT family. Homodimer. It depends on pyridoxal 5'-phosphate as a cofactor.

It is found in the cytoplasm. The catalysed reaction is (6R)-5,10-methylene-5,6,7,8-tetrahydrofolate + glycine + H2O = (6S)-5,6,7,8-tetrahydrofolate + L-serine. It functions in the pathway one-carbon metabolism; tetrahydrofolate interconversion. The protein operates within amino-acid biosynthesis; glycine biosynthesis; glycine from L-serine: step 1/1. In terms of biological role, catalyzes the reversible interconversion of serine and glycine with tetrahydrofolate (THF) serving as the one-carbon carrier. This reaction serves as the major source of one-carbon groups required for the biosynthesis of purines, thymidylate, methionine, and other important biomolecules. Also exhibits THF-independent aldolase activity toward beta-hydroxyamino acids, producing glycine and aldehydes, via a retro-aldol mechanism. This chain is Serine hydroxymethyltransferase, found in Pelotomaculum thermopropionicum (strain DSM 13744 / JCM 10971 / SI).